A 555-amino-acid chain; its full sequence is Glucose-6-phosphate isomerase (555 aa).

Residues 169–170, 219–224, Q364, E368, H399, and K521 contribute to the D-glucose 6-phosphate site; these read GS and SKTFTT. E368 serves as the catalytic Proton donor. Catalysis depends on residues H399 and K521.

The protein belongs to the GPI family. As to quaternary structure, homodimer.

It localises to the cytoplasm. The protein resides in the cytosol. It catalyses the reaction alpha-D-glucose 6-phosphate = beta-D-fructose 6-phosphate. It functions in the pathway carbohydrate degradation; glycolysis; D-glyceraldehyde 3-phosphate and glycerone phosphate from D-glucose: step 2/4. Functionally, in the cytoplasm, catalyzes the conversion of glucose-6-phosphate to fructose-6-phosphate, the second step in glycolysis, and the reverse reaction during gluconeogenesis. The chain is Glucose-6-phosphate isomerase (PGI1) from Eremothecium gossypii (strain ATCC 10895 / CBS 109.51 / FGSC 9923 / NRRL Y-1056) (Yeast).